A 252-amino-acid chain; its full sequence is 4-hydroxy-tetrahydrodipicolinate reductase (252 aa).

NAD(+)-binding positions include 8–13, 85–87, and 109–112; these read GCSGKM, CTT, and SANM. Catalysis depends on histidine 142, which acts as the Proton donor/acceptor. Residue histidine 143 coordinates (S)-2,3,4,5-tetrahydrodipicolinate. Lysine 146 serves as the catalytic Proton donor. 152–153 is a binding site for (S)-2,3,4,5-tetrahydrodipicolinate; it reads GT.

It belongs to the DapB family.

The protein resides in the cytoplasm. It carries out the reaction (S)-2,3,4,5-tetrahydrodipicolinate + NAD(+) + H2O = (2S,4S)-4-hydroxy-2,3,4,5-tetrahydrodipicolinate + NADH + H(+). The enzyme catalyses (S)-2,3,4,5-tetrahydrodipicolinate + NADP(+) + H2O = (2S,4S)-4-hydroxy-2,3,4,5-tetrahydrodipicolinate + NADPH + H(+). The protein operates within amino-acid biosynthesis; L-lysine biosynthesis via DAP pathway; (S)-tetrahydrodipicolinate from L-aspartate: step 4/4. Its function is as follows. Catalyzes the conversion of 4-hydroxy-tetrahydrodipicolinate (HTPA) to tetrahydrodipicolinate. The sequence is that of 4-hydroxy-tetrahydrodipicolinate reductase from Clostridium novyi (strain NT).